The chain runs to 256 residues: Cytokine-inducible SH2-containing protein (256 aa).

One can recognise an SH2 domain in the interval 81–162 (WYWGSITASE…PDVVSLVQHY (82 aa)). Residues 168–190 (ADTRSDSPDPAPTPALPVSKPDA) form a disordered region. One can recognise an SOCS box domain in the interval 207–255 (KLVQPFVRRSSARSLQHLCRLVINRLVTDVDCLPLPRRMADYLRQYPFQ).

Stably associated with the tyrosine-phosphorylated IL3 receptor beta chain and tyrosine-phosphorylated EPO receptor (EPOR).

It participates in protein modification; protein ubiquitination. Functionally, SOCS family proteins form part of a classical negative feedback system that regulates cytokine signal transduction. CIS is involved in the negative regulation of cytokines that signal through the JAK-STAT5 pathway such as erythropoietin, prolactin and interleukin 3 (IL3) receptor. Inhibits STAT5 trans-activation by suppressing its tyrosine phosphorylation. May be a substrate recognition component of a SCF-like ECS (Elongin BC-CUL2/5-SOCS-box protein) E3 ubiquitin-protein ligase complex which mediates the ubiquitination and subsequent proteasomal degradation of target proteins. The protein is Cytokine-inducible SH2-containing protein (Cish) of Rattus norvegicus (Rat).